A 106-amino-acid polypeptide reads, in one-letter code: Cytochrome c3 (106 aa).

Residues histidine 26, histidine 29, cysteine 34, cysteine 37, histidine 38, histidine 39, cysteine 50, cysteine 55, histidine 56, histidine 75, cysteine 82, cysteine 85, histidine 86, cysteine 98, cysteine 101, and histidine 102 each coordinate heme c.

In terms of processing, binds 4 heme c groups per subunit.

In terms of biological role, participates in sulfate respiration coupled with phosphorylation by transferring electrons from the enzyme dehydrogenase to ferredoxin. In Maridesulfovibrio salexigens (Desulfovibrio salexigens), this protein is Cytochrome c3.